The following is a 231-amino-acid chain: Phosphatidylserine decarboxylase proenzyme (231 aa).

Catalysis depends on Ser188, which acts as the Schiff-base intermediate with substrate; via pyruvic acid. Residue Ser188 is modified to Pyruvic acid (Ser); by autocatalysis.

This sequence belongs to the phosphatidylserine decarboxylase family. PSD-A subfamily. In terms of assembly, heterodimer of a large membrane-associated beta subunit and a small pyruvoyl-containing alpha subunit. Pyruvate serves as cofactor. Post-translationally, is synthesized initially as an inactive proenzyme. Formation of the active enzyme involves a self-maturation process in which the active site pyruvoyl group is generated from an internal serine residue via an autocatalytic post-translational modification. Two non-identical subunits are generated from the proenzyme in this reaction, and the pyruvate is formed at the N-terminus of the alpha chain, which is derived from the carboxyl end of the proenzyme. The post-translation cleavage follows an unusual pathway, termed non-hydrolytic serinolysis, in which the side chain hydroxyl group of the serine supplies its oxygen atom to form the C-terminus of the beta chain, while the remainder of the serine residue undergoes an oxidative deamination to produce ammonia and the pyruvoyl prosthetic group on the alpha chain.

It localises to the cell membrane. It catalyses the reaction a 1,2-diacyl-sn-glycero-3-phospho-L-serine + H(+) = a 1,2-diacyl-sn-glycero-3-phosphoethanolamine + CO2. Its pathway is phospholipid metabolism; phosphatidylethanolamine biosynthesis; phosphatidylethanolamine from CDP-diacylglycerol: step 2/2. Functionally, catalyzes the formation of phosphatidylethanolamine (PtdEtn) from phosphatidylserine (PtdSer). This Rickettsia bellii (strain OSU 85-389) protein is Phosphatidylserine decarboxylase proenzyme.